The chain runs to 168 residues: RNA pyrophosphohydrolase (168 aa).

A Nudix hydrolase domain is found at 8-159; sequence PYRTCVGVML…KRPVYERVVK (152 aa). The short motif at 47-68 is the Nudix box element; it reads GGVDPGEDTWKAAKRELYEETS.

Belongs to the Nudix hydrolase family. RppH subfamily. A divalent metal cation serves as cofactor.

Accelerates the degradation of transcripts by removing pyrophosphate from the 5'-end of triphosphorylated RNA, leading to a more labile monophosphorylated state that can stimulate subsequent ribonuclease cleavage. In Rhodopseudomonas palustris (strain ATCC BAA-98 / CGA009), this protein is RNA pyrophosphohydrolase.